Here is a 31-residue protein sequence, read N- to C-terminus: Cytochrome b6-f complex subunit 6 (31 aa).

The chain crosses the membrane as a helical span at residues 3 to 23 (IAIDYFLLVGFCFAFTSGLYL).

Belongs to the PetL family. The 4 large subunits of the cytochrome b6-f complex are cytochrome b6, subunit IV (17 kDa polypeptide, PetD), cytochrome f and the Rieske protein, while the 4 small subunits are PetG, PetL, PetM and PetN. The complex functions as a dimer.

The protein localises to the plastid. It is found in the chloroplast thylakoid membrane. In terms of biological role, component of the cytochrome b6-f complex, which mediates electron transfer between photosystem II (PSII) and photosystem I (PSI), cyclic electron flow around PSI, and state transitions. PetL is important for photoautotrophic growth as well as for electron transfer efficiency and stability of the cytochrome b6-f complex. The chain is Cytochrome b6-f complex subunit 6 from Trieres chinensis (Marine centric diatom).